The following is a 217-amino-acid chain: MSNPFLKQVFNKDKTFRPKRKFEPGTQRFELHKKAQASLNAGLDLRLAVQLPPGEDLNDWVAVHVVDFFNRVNLIYGTISDGCTEQSCPVMSGGPKYEYRWQDEHKFRKPTALSAPRYMDLLMDWIEAQINNEDLFPTNVGTPFPKNFLQTVRKILSRLFRVFVHVYIHHFDRIAQMGSEAHVNTCYKHFYYFVKEFGLIDTKELEPLKEMTARMCH.

Zn(2+) is bound by residues C83, C88, H165, and H170.

It belongs to the MOB1/phocein family.

Its function is as follows. May regulate the activity of kinases. In Homo sapiens (Human), this protein is MOB kinase activator 3A (MOB3A).